The chain runs to 1702 residues: MRDEVDLSLTIPSKLLGKRDREQKNCEEEKNKNKKAKKQQKDPILLHTSAATHKFLPPPLTMPYSEIGDDLRSLDFDHADVSSDLHLTSSSSVSSFSSSSSSLFSAAGTDDPSPKMEKDPRKIARRYQVELCKKATEENVIVYLGTGCGKTHIAVMLIYELGHLVLSPKKSVCIFLAPTVALVEQQAKVIADSVNFKVAIHCGGKRIVKSHSEWEREIAANEVLVMTPQILLHNLQHCFIKMECISLLIFDECHHAQQQSNHPYAEIMKVFYKSESLQRPRIFGMTASPVVGKGSFQSENLSKSINSLENLLNAKVYSVESNVQLDGFVSSPLVKVYYYRSALSDASQSTIRYENMLEDIKQRCLASLKLLIDTHQTQTLLSMKRLLKRSHDNLIYTLLNLGLWGAIQAAKIQLNSDHNVQDEPVGKNPKSKICDTYLSMAAEALSSGVAKDENASDLLSLAALKEPLFSRKLVQLIKILSVFRLEPHMKCIIFVNRIVTARTLSCILNNLELLRSWKSDFLVGLSSGLKSMSRRSMETILKRFQSKELNLLVATKVGEEGLDIQTCCLVIRYDLPETVTSFIQSRGRARMPQSEYAFLVDSGNEKEMDLIENFKVNEDRMNLEITYRSSEETCPRLDEELYKVHETGACISGGSSISLLYKYCSRLPHDEFFQPKPEFQFKPVDEFGGTICRITLPANAPISEIESSLLPSTEAAKKDACLKAVHELHNLGVLNDFLLPDSKDEIEDELSDDEFDFDNIKGEGCSRGDLYEMRVPVLFKQKWDPSTSCVNLHSYYIMFVPHPADRIYKKFGFFMKSPLPVEAETMDIDLHLAHQRSVSVKIFPSGVTEFDNDEIRLAELFQEIALKVLFERGELIPDFVPLELQDSSRTSKSTFYLLLPLCLHDGESVISVDWVTIRNCLSSPIFKTPSVLVEDIFPPSGSHLKLANGCWNIDDVKNSLVFTTYSKQFYFVADICHGRNGFSPVKESSTKSHVESIYKLYGVELKHPAQPLLRVKPLCHVRNLLHNRMQTNLEPQELDEYFIEIPPELSHLKIKGLSKDIGSSLSLLPSIMHRMENLLVAIELKHVLSASIPEIAEVSGHRVLEALTTEKCHERLSLERLEVLGDAFLKFAVSRHLFLHHDSLDEGELTRRRSNVVNNSNLCRLAIKKNLQVYIRDQALDPTQFFAFGHPCRVTCDEVASKEVHSLNRDLGILESNTGEIRCSKGHHWLYKKTIADVVEALVGAFLVDSGFKGAVKFLKWIGVNVDFESLQVQDACIASRRYLPLTTRNNLETLENQLDYKFLHKGLLVQAFIHPSYNRHGGGCYQRLEFLGDAVLDYLMTSYFFTVFPKLKPGQLTDLRSLSVNNEALANVAVSFSLKRFLFCESIYLHEVIEDYTNFLASSPLASGQSEGPRCPKVLGDLVESCLGALFLDCGFNLNHVWTMMLSFLDPVKNLSNLQISPIKELIELCQSYKWDREISATKKDGAFTVELKVTKNGCCLTVSATGRNKREGTKKAAQLMITNLKAHENITTSHPLEDVLKNGIRNEAKLIGYNEDPIDVVDLVGLDVENLNILETFGGNSERSSSYVIRRGLPQAPSKTEDRLPQKAIIKAGGPSSKTAKSLLHETCVANCWKPPHFECCEEEGPGHLKSFVYKVILEVEDAPNMTLECYGEARATKKGAAEHAAQAAIWCLKHSGFLC.

2 disordered regions span residues 1 to 52 (MRDE…SAAT) and 89 to 120 (SSSS…EKDP). The segment covering 17–31 (GKRDREQKNCEEEKN) has biased composition (basic and acidic residues). Positions 89–105 (SSSSVSSFSSSSSSLFS) are enriched in low complexity. The Helicase ATP-binding domain maps to 131–307 (LCKKATEENV…SENLSKSINS (177 aa)). Position 144 to 151 (144 to 151 (LGTGCGKT)) interacts with ATP. The short motif at 251 to 254 (DECH) is the DECH box element. Positions 475–629 (QLIKILSVFR…RMNLEITYRS (155 aa)) constitute a Helicase C-terminal domain. Positions 656 to 748 (SISLLYKYCS…LPDSKDEIED (93 aa)) constitute a Dicer dsRNA-binding fold domain. Residues 932-1054 (LVEDIFPPSG…IPPELSHLKI (123 aa)) form the PAZ domain. RNase III domains follow at residues 1083-1251 (ELKH…VDSG) and 1292-1436 (LETL…LDCG). Mg(2+) contacts are provided by Glu-1330, Asp-1422, and Glu-1425. 2 DRBM domains span residues 1462 to 1528 (SPIK…NLKA) and 1621 to 1697 (TAKS…CLKH).

Belongs to the helicase family. Dicer subfamily. Interacts with DRB4. The cofactor is Mg(2+). Requires Mn(2+) as cofactor.

Its subcellular location is the nucleus. Ribonuclease (RNase) III involved in RNA-mediated post-transcriptional gene silencing (PTGS). Functions in the biogenesis of trans-acting small interfering RNAs (ta-siRNAs, derived from the TAS1, TAS2 or TAS3 endogenous transcripts) by cleaving small dsRNAs into 21-24 nucleotide ta-siRNAs. Functions with the dsRNA-binding protein DRB4 in ta-siRNAs processing. Acts in the RDR6/SGS3/DCL4/AGO7 ta-siRNA pathway involved in leaf developmental timing. Plays a role in transitive silencing of transgenes by processing secondary siRNAs. This pathway, which requires DCL2 and RDR6, amplifies silencing by using the target RNA as substrate to generate secondary siRNAs, providing an efficient mechanism for long-distance silencing. Required for the production of the 30-40 nucleotide bacterial-induced long siRNAs (lsiRNA). May participate with DCL3 in the production of 24 nucleotide repeat-associated siRNAs (ra-siRNAs) which derive from heterochromatin and DNA repeats such as transposons. Plays an important role in antiviral RNA silencing. Involved in the production of viral siRNAs derived from the cucumber mosaic virus (CMV), turnip crinkle virus (TCV) and tobacco rattle virus (TRV). Targeted by the viral silencing suppressor (VSR) protein 2b of the cucumber mosaic virus (CMV) that inactivates DCL4 function in RNA silencing. Does not seem to be involved in microRNAs (miRNAs) processing. The polypeptide is Dicer-like protein 4 (DCL4) (Arabidopsis thaliana (Mouse-ear cress)).